The following is an 886-amino-acid chain: Isoleucine--tRNA ligase (886 aa).

Residues 60-70 carry the 'HIGH' region motif; that stretch reads PYANGDIHIGH. An L-isoleucyl-5'-AMP-binding site is contributed by Glu546. Positions 587–591 match the 'KMSKS' region motif; sequence KMSKS. ATP is bound at residue Lys590. Zn(2+) contacts are provided by Cys856, Cys859, Cys870, and Cys873.

The protein belongs to the class-I aminoacyl-tRNA synthetase family. IleS type 1 subfamily. Monomer. Zn(2+) is required as a cofactor.

Its subcellular location is the cytoplasm. The enzyme catalyses tRNA(Ile) + L-isoleucine + ATP = L-isoleucyl-tRNA(Ile) + AMP + diphosphate. Its function is as follows. Catalyzes the attachment of isoleucine to tRNA(Ile). As IleRS can inadvertently accommodate and process structurally similar amino acids such as valine, to avoid such errors it has two additional distinct tRNA(Ile)-dependent editing activities. One activity is designated as 'pretransfer' editing and involves the hydrolysis of activated Val-AMP. The other activity is designated 'posttransfer' editing and involves deacylation of mischarged Val-tRNA(Ile). The polypeptide is Isoleucine--tRNA ligase (Mesomycoplasma hyopneumoniae (strain 7448) (Mycoplasma hyopneumoniae)).